The chain runs to 1685 residues: Collagen alpha-5(IV) chain (1685 aa).

The N-terminal stretch at methionine 1 to alanine 26 is a signal peptide. A nonhelical region (NC2) region spans residues alanine 27–serine 41. Positions glycine 42–serine 1456 are triple-helical region. The disordered stretch occupies residues glutamate 49–alanine 1459. Residues phenylalanine 52–leucine 61 are compositionally biased toward low complexity. Residues proline 62–proline 73 are compositionally biased toward pro residues. The N-linked (GlcNAc...) asparagine glycan is linked to asparagine 125. Over residues threonine 188–proline 212 the composition is skewed to pro residues. The segment covering proline 214 to proline 225 has biased composition (low complexity). Positions glutamate 246 to lysine 257 are enriched in basic and acidic residues. Pro residues predominate over residues arginine 266–proline 281. Composition is skewed to basic and acidic residues over residues glutamate 284–glutamate 305 and proline 324–lysine 333. The span at proline 413–alanine 430 shows a compositional bias: low complexity. Composition is skewed to pro residues over residues proline 431–proline 445, proline 493–proline 505, methionine 620–proline 630, and proline 709–proline 727. Low complexity predominate over residues arginine 788–proline 797. Composition is skewed to pro residues over residues proline 848–proline 859 and proline 868–proline 880. Low complexity-rich tracts occupy residues leucine 882–methionine 901, isoleucine 912–proline 931, tyrosine 983–proline 999, asparagine 1010–lysine 1026, and threonine 1111–leucine 1120. A compositionally biased stretch (pro residues) spans proline 1139–proline 1148. Composition is skewed to gly residues over residues glycine 1149–glycine 1158 and glycine 1202–glycine 1211. Pro residues-rich tracts occupy residues glutamine 1234–proline 1243 and proline 1256–leucine 1274. Positions leucine 1295 to glutamine 1308 are enriched in low complexity. Residues isoleucine 1353–proline 1362 are compositionally biased toward pro residues. The region spanning glycine 1461–threonine 1685 is the Collagen IV NC1 domain. 6 disulfides stabilise this stretch: cysteine 1476–cysteine 1567, cysteine 1509–cysteine 1564, cysteine 1521–cysteine 1527, cysteine 1586–cysteine 1681, cysteine 1620–cysteine 1678, and cysteine 1632–cysteine 1638. Methionine 1549 participates in a covalent cross-link: S-Lysyl-methionine sulfilimine (Met-Lys) (interchain with K-1667). Lysine 1667 participates in a covalent cross-link: S-Lysyl-methionine sulfilimine (Lys-Met) (interchain with M-1549).

This sequence belongs to the type IV collagen family. There are six type IV collagen isoforms, alpha 1(IV)-alpha 6(IV), each of which can form a triple helix structure with 2 other chains to generate type IV collagen network. In terms of processing, prolines at the third position of the tripeptide repeating unit (G-X-Y) are hydroxylated in some or all of the chains. Post-translationally, type IV collagens contain numerous cysteine residues which are involved in inter- and intramolecular disulfide bonding. 12 of these, located in the NC1 domain, are conserved in all known type IV collagens. The trimeric structure of the NC1 domains is stabilized by covalent bonds between Lys and Met residues. Isoform 2 is found in kidney.

The protein localises to the secreted. It is found in the extracellular space. It localises to the extracellular matrix. The protein resides in the basement membrane. Functionally, type IV collagen is the major structural component of glomerular basement membranes (GBM), forming a 'chicken-wire' meshwork together with laminins, proteoglycans and entactin/nidogen. This chain is Collagen alpha-5(IV) chain (COL4A5), found in Homo sapiens (Human).